Here is a 291-residue protein sequence, read N- to C-terminus: Transcription factor TYE7 (291 aa).

The tract at residues 89-109 (FPTDQFFSNPSSYSHSPEVSS) is disordered. Over residues 96-109 (SNPSSYSHSPEVSS) the composition is skewed to low complexity. Ser104 is subject to Phosphoserine. The 86-residue stretch at 180-265 (FQKQAHNKIE…EKAVDYILYL (86 aa)) folds into the bHLH domain. His185, Glu189, and Arg193 together coordinate DNA. Residues 221-245 (DSVKKQDEDGAETAATTPLPSAAAT) form a disordered region. The span at 233-245 (TAATTPLPSAAAT) shows a compositional bias: low complexity. At Thr237 the chain carries Phosphothreonine.

Homodimer. Efficient DNA binding requires dimerization with another bHLH protein.

Its subcellular location is the nucleus. Functionally, transcriptional activator of glycolytic gene expression, such as enolase genes (ENO1 and ENO2), glyceraldehyde-3-phosphate dehydrogenase gene (TDH), phosphoglycerate kinase (PGK1), phosphoglycerate mutase (PGM1), pyruvate kinase (PYK1) and triosephosphate isomerase (TPI1) genes. Binds DNA on E-box motifs: 5'-CANNTG-3'. In response to adenylic nucleotide reduction, activates Ty1 mRNA transcription, possibly by controlling Ty1 antisense transcription. Acts as a cell cycle transcription factor. Its function may also be linked to sulfur metabolism and the cross-regulation between phosphate and sulfate metabolism. This is Transcription factor TYE7 from Saccharomyces cerevisiae (strain ATCC 204508 / S288c) (Baker's yeast).